We begin with the raw amino-acid sequence, 189 residues long: Elongation factor P (189 aa).

This sequence belongs to the elongation factor P family.

The protein resides in the cytoplasm. It functions in the pathway protein biosynthesis; polypeptide chain elongation. Involved in peptide bond synthesis. Stimulates efficient translation and peptide-bond synthesis on native or reconstituted 70S ribosomes in vitro. Probably functions indirectly by altering the affinity of the ribosome for aminoacyl-tRNA, thus increasing their reactivity as acceptors for peptidyl transferase. This chain is Elongation factor P, found in Sinorhizobium medicae (strain WSM419) (Ensifer medicae).